We begin with the raw amino-acid sequence, 355 residues long: 3-dehydroquinate synthase (355 aa).

NAD(+) contacts are provided by residues 106 to 110, 130 to 131, lysine 143, and lysine 152; these read GVVGD and TS. 3 residues coordinate Zn(2+): glutamate 185, histidine 246, and histidine 262.

This sequence belongs to the sugar phosphate cyclases superfamily. Dehydroquinate synthase family. It depends on Co(2+) as a cofactor. Zn(2+) is required as a cofactor. The cofactor is NAD(+).

The protein resides in the cytoplasm. It carries out the reaction 7-phospho-2-dehydro-3-deoxy-D-arabino-heptonate = 3-dehydroquinate + phosphate. The protein operates within metabolic intermediate biosynthesis; chorismate biosynthesis; chorismate from D-erythrose 4-phosphate and phosphoenolpyruvate: step 2/7. In terms of biological role, catalyzes the conversion of 3-deoxy-D-arabino-heptulosonate 7-phosphate (DAHP) to dehydroquinate (DHQ). The polypeptide is 3-dehydroquinate synthase (Latilactobacillus sakei subsp. sakei (strain 23K) (Lactobacillus sakei subsp. sakei)).